The chain runs to 212 residues: ATP-dependent dethiobiotin synthetase BioD (212 aa).

ATP is bound at residue 13–18 (GIGKTV). Thr17 contacts Mg(2+). Residue Lys33 is part of the active site. Ser37 is a binding site for substrate. Mg(2+) is bound at residue Glu100. ATP-binding positions include 100–103 (EGAG) and 184–186 (PLL).

Belongs to the dethiobiotin synthetase family. As to quaternary structure, homodimer. It depends on Mg(2+) as a cofactor.

Its subcellular location is the cytoplasm. It catalyses the reaction (7R,8S)-7,8-diammoniononanoate + CO2 + ATP = (4R,5S)-dethiobiotin + ADP + phosphate + 3 H(+). Its pathway is cofactor biosynthesis; biotin biosynthesis; biotin from 7,8-diaminononanoate: step 1/2. Catalyzes a mechanistically unusual reaction, the ATP-dependent insertion of CO2 between the N7 and N8 nitrogen atoms of 7,8-diaminopelargonic acid (DAPA, also called 7,8-diammoniononanoate) to form a ureido ring. The protein is ATP-dependent dethiobiotin synthetase BioD of Brucella canis (strain ATCC 23365 / NCTC 10854 / RM-666).